The sequence spans 378 residues: Formate dehydrogenase 2, mitochondrial (378 aa).

The transit peptide at 1-18 (MAMWRAPSAAGQLLGRAL) directs the protein to the mitochondrion. 2 residues coordinate substrate: Val122 and Asn146. Residues Thr147, 201–202 (RI), Asp221, 256–260 (PLTEK), Asn282, Asp308, and 332–335 (HCSG) contribute to the NAD(+) site.

The protein belongs to the D-isomer specific 2-hydroxyacid dehydrogenase family. FDH subfamily. In terms of assembly, homodimer.

The protein localises to the mitochondrion. The enzyme catalyses formate + NAD(+) = CO2 + NADH. Its function is as follows. Catalyzes the NAD(+)-dependent oxidation of formate to carbon dioxide. Involved in the cell stress response. This Oryza sativa subsp. japonica (Rice) protein is Formate dehydrogenase 2, mitochondrial.